Reading from the N-terminus, the 78-residue chain is Putative membrane protein insertion efficiency factor (78 aa).

Belongs to the UPF0161 family.

It localises to the cell inner membrane. In terms of biological role, could be involved in insertion of integral membrane proteins into the membrane. The chain is Putative membrane protein insertion efficiency factor from Roseobacter denitrificans (strain ATCC 33942 / OCh 114) (Erythrobacter sp. (strain OCh 114)).